Here is a 374-residue protein sequence, read N- to C-terminus: Alcohol dehydrogenase class-3 (374 aa).

A2 bears the N-acetylalanine mark. Zn(2+) contacts are provided by C45, H67, C97, C100, C103, C111, and C174. Residue K233 is modified to N6-succinyllysine. Residue S247 is modified to Phosphoserine. An N6-succinyllysine modification is found at K315. A phosphoserine mark is found at S324 and S351.

This sequence belongs to the zinc-containing alcohol dehydrogenase family. Class-III subfamily. In terms of assembly, homodimer. Requires Zn(2+) as cofactor.

The protein localises to the cytoplasm. It carries out the reaction a primary alcohol + NAD(+) = an aldehyde + NADH + H(+). The catalysed reaction is a secondary alcohol + NAD(+) = a ketone + NADH + H(+). The enzyme catalyses S-(hydroxymethyl)glutathione + NADP(+) = S-formylglutathione + NADPH + H(+). It catalyses the reaction S-(hydroxymethyl)glutathione + NAD(+) = S-formylglutathione + NADH + H(+). It carries out the reaction 20-oxo-(5Z,8Z,11Z,14Z)-eicosatetraenoate + NAD(+) + H2O = (5Z,8Z,11Z,14Z)-eicosatetraenedioate + NADH + 2 H(+). The catalysed reaction is 20-hydroxy-(5Z,8Z,11Z,14Z)-eicosatetraenoate + NAD(+) = 20-oxo-(5Z,8Z,11Z,14Z)-eicosatetraenoate + NADH + H(+). The enzyme catalyses S-nitrosoglutathione + NADH + H(+) = S-(hydroxysulfenamide)glutathione + NAD(+). Functionally, catalyzes the oxidation of long-chain primary alcohols and the oxidation of S-(hydroxymethyl) glutathione. Also oxidizes long chain omega-hydroxy fatty acids, such as 20-HETE, producing both the intermediate aldehyde, 20-oxoarachidonate and the end product, a dicarboxylic acid, (5Z,8Z,11Z,14Z)-eicosatetraenedioate. Class-III ADH is remarkably ineffective in oxidizing ethanol. Required for clearance of cellular formaldehyde, a cytotoxic and carcinogenic metabolite that induces DNA damage. Also acts as a S-nitroso-glutathione reductase by catalyzing the NADH-dependent reduction of S-nitrosoglutathione, thereby regulating protein S-nitrosylation. This Homo sapiens (Human) protein is Alcohol dehydrogenase class-3.